The chain runs to 549 residues: MLTSERSYLRYPKNRRWTEAGRFWAPHPENVLFIHKPTMEETRRVALGLRSQLVRNRERKTKAHLLSLELDRLVQVHDSRVRVINADIDAVKQMIGNMTWSDNIDMPQSRSHEPPLVTSPPQASHRNFTVAIVPGDPHFSVDRDLRGELMPTLYMNQNQWLPSFGPWFISLTDNAMQRRVFPKELKGTVNFQNSTSLKLISHTLTTVASTTADFFADARHLTDTQAALCLVNAYFCQKTSRQLPATPDDLLADLPQKLDLLITQLKQESGPGDFSFTYSNPQERASLAPLNKESRYPTAFFQRHKLHAMMAKAGLFPHNKGTGAPGTAPAMDLVFAITSAMFGSDIPPFSAYQWNLRAGIVALEVFILAYGLLEFGQVARGHPNRRLNLVSLLGPKFQPGALPDPNAPMLKRGQLFSFISEHYIIPTLQANPNAPVSFIFPGIILAALEARSTVSHKQPGPFVNLTGSRFNEIFEILNQQLTFRDPLALLQARTALRLATEEGLDVLLSHPSPPTLLQEIIKSQFGGGDDYDRAYFMVLGCLPVVLAVV.

The tract at residues 1–54 (MLTSERSYLRYPKNRRWTEAGRFWAPHPENVLFIHKPTMEETRRVALGLRSQLV) is interaction with major capsid protein/MCP.

It belongs to the herpesviridae CVC2 protein family. As to quaternary structure, heterodimerizes with CVC1. Interacts with major capsid protein/MCP and triplex capsid protein 1/TRX1 at the pentamer vertices. Interacts with the large tegument protein/LTP.

Its subcellular location is the virion. The protein localises to the host nucleus. Its function is as follows. Capsid vertex-specific component that plays a role during viral DNA encapsidation, assuring correct genome cleavage and presumably stabilizing capsids that contain full-length viral genomes. Participates in the interaction between the capsid and the tegument through interaction with the large tegument protein/LTP. This is Capsid vertex component 2 from Human herpesvirus 8 type P (isolate GK18) (HHV-8).